A 348-amino-acid polypeptide reads, in one-letter code: D-alanine--D-alanine ligase (348 aa).

An ATP-grasp domain is found at 132 to 334; that stretch reads KRVLESAGIP…YSDLIEELVS (203 aa). 162–217 lines the ATP pocket; it reads LETLSFPIFVKPANMGSSVGISKAESIEGLREAIALALKYDSRILIEQGVVAREIE. Mg(2+) contacts are provided by aspartate 288, glutamate 301, and asparagine 303.

It belongs to the D-alanine--D-alanine ligase family. Mg(2+) is required as a cofactor. It depends on Mn(2+) as a cofactor.

It localises to the cytoplasm. It catalyses the reaction 2 D-alanine + ATP = D-alanyl-D-alanine + ADP + phosphate + H(+). It participates in cell wall biogenesis; peptidoglycan biosynthesis. In terms of biological role, cell wall formation. This Streptococcus uberis (strain ATCC BAA-854 / 0140J) protein is D-alanine--D-alanine ligase.